We begin with the raw amino-acid sequence, 692 residues long: UvrABC system protein B (692 aa).

Residues 32–418 (DNIENGEKAQ…QTDTIVEQII (387 aa)) enclose the Helicase ATP-binding domain. 45–52 (GATGTGKT) provides a ligand contact to ATP. Positions 98–121 (YYDYYQPEAYVPSSDTYIEKDSSV) match the Beta-hairpin motif. Residues 436-631 (QIDDLVGEIH…TIKKEIRDLI (196 aa)) form the Helicase C-terminal domain. The UVR domain maps to 656–691 (KALVKKLEKEMQQAASALDFEGAAQLRDMVLELRAM).

It belongs to the UvrB family. In terms of assembly, forms a heterotetramer with UvrA during the search for lesions. Interacts with UvrC in an incision complex.

Its subcellular location is the cytoplasm. The UvrABC repair system catalyzes the recognition and processing of DNA lesions. A damage recognition complex composed of 2 UvrA and 2 UvrB subunits scans DNA for abnormalities. Upon binding of the UvrA(2)B(2) complex to a putative damaged site, the DNA wraps around one UvrB monomer. DNA wrap is dependent on ATP binding by UvrB and probably causes local melting of the DNA helix, facilitating insertion of UvrB beta-hairpin between the DNA strands. Then UvrB probes one DNA strand for the presence of a lesion. If a lesion is found the UvrA subunits dissociate and the UvrB-DNA preincision complex is formed. This complex is subsequently bound by UvrC and the second UvrB is released. If no lesion is found, the DNA wraps around the other UvrB subunit that will check the other stand for damage. The chain is UvrABC system protein B from Lactococcus lactis subsp. lactis (strain IL1403) (Streptococcus lactis).